A 319-amino-acid chain; its full sequence is Cobalamin biosynthesis protein CobD (319 aa).

Transmembrane regions (helical) follow at residues 56-76 (VMWLVVIGLTWGVAWGVLALA), 78-98 (GIHPWLGWLVEVWMIFTALAG), 153-173 (VDGIIAPLFFLLLGGAPLAMA), 204-224 (VANFLPARLSWLLLSLAAVLC), and 296-316 (LMWVASSLALALFIGVRYWLV).

Belongs to the CobD/CbiB family.

Its subcellular location is the cell membrane. The protein operates within cofactor biosynthesis; adenosylcobalamin biosynthesis. Converts cobyric acid to cobinamide by the addition of aminopropanol on the F carboxylic group. The chain is Cobalamin biosynthesis protein CobD from Klebsiella pneumoniae subsp. pneumoniae (strain ATCC 700721 / MGH 78578).